The chain runs to 87 residues: UPF0250 protein SG0794 (87 aa).

Belongs to the UPF0250 family.

This Sodalis glossinidius (strain morsitans) protein is UPF0250 protein SG0794.